A 309-amino-acid polypeptide reads, in one-letter code: Homoserine O-succinyltransferase (309 aa).

Catalysis depends on Cys142, which acts as the Acyl-thioester intermediate. Substrate-binding residues include Lys163 and Ser192. His235 functions as the Proton acceptor in the catalytic mechanism. Residue Glu237 is part of the active site. Arg249 is a substrate binding site.

This sequence belongs to the MetA family. Homodimer.

It localises to the cytoplasm. The catalysed reaction is L-homoserine + succinyl-CoA = O-succinyl-L-homoserine + CoA. The protein operates within amino-acid biosynthesis; L-methionine biosynthesis via de novo pathway; O-succinyl-L-homoserine from L-homoserine: step 1/1. Functionally, transfers a succinyl group from succinyl-CoA to L-homoserine, forming succinyl-L-homoserine. The polypeptide is Homoserine O-succinyltransferase (Salmonella gallinarum (strain 287/91 / NCTC 13346)).